Consider the following 668-residue polypeptide: uncharacterized protein (668 aa).

9 consecutive transmembrane segments (helical) span residues 182–202 (FAFA…GILG), 208–228 (PYSY…IQFW), 286–306 (VPLF…AFIV), 321–341 (IVSL…TFIY), 379–399 (ALFL…PHYI), 430–450 (IYFL…VPQL), 499–519 (FVLM…APIF), 557–577 (LSLL…FYSS), and 587–607 (VIAA…RMFI).

It is found in the membrane. This is an uncharacterized protein from Schizosaccharomyces pombe (strain 972 / ATCC 24843) (Fission yeast).